A 450-amino-acid polypeptide reads, in one-letter code: Divalent metal cation transporter MntH (450 aa).

11 helical membrane passes run 34–54 (LSFL…GNWI), 61–81 (AQYG…AMLL), 108–128 (IAII…IAEV), 141–161 (IPLI…LFIM), 170–190 (AIVG…VYIS), 212–232 (GILY…NLYL), 263–283 (IQLS…ASLF), 305–325 (PVLG…ALLA), 361–381 (SLAV…AAKI), 383–403 (QLLV…LIPL), and 422–442 (VNII…YLIV).

This sequence belongs to the NRAMP family.

The protein resides in the cell membrane. In terms of biological role, h(+)-stimulated, divalent metal cation uptake system. The sequence is that of Divalent metal cation transporter MntH from Staphylococcus aureus (strain bovine RF122 / ET3-1).